A 445-amino-acid polypeptide reads, in one-letter code: 26S proteasome regulatory subunit RPN5 (445 aa).

N-acetylserine is present on serine 2. Residues 233–407 (EYLEVAQYLQ…KIVNFEKPKN (175 aa)) enclose the PCI domain.

The protein belongs to the proteasome subunit p55 family. Post-translationally, N-acetylated by NAT1.

Functionally, acts as a regulatory subunit of the 26S proteasome which is involved in the ATP-dependent degradation of ubiquitinated proteins. The protein is 26S proteasome regulatory subunit RPN5 (RPN5) of Saccharomyces cerevisiae (strain ATCC 204508 / S288c) (Baker's yeast).